The sequence spans 366 residues: Ribosomal RNA large subunit methyltransferase M (366 aa).

Residues Ser188, 221 to 224 (CPGG), Asp240, Asp260, and Asp277 contribute to the S-adenosyl-L-methionine site. The Proton acceptor role is filled by Lys306.

This sequence belongs to the class I-like SAM-binding methyltransferase superfamily. RNA methyltransferase RlmE family. RlmM subfamily. Monomer.

The protein resides in the cytoplasm. The catalysed reaction is cytidine(2498) in 23S rRNA + S-adenosyl-L-methionine = 2'-O-methylcytidine(2498) in 23S rRNA + S-adenosyl-L-homocysteine + H(+). Its function is as follows. Catalyzes the 2'-O-methylation at nucleotide C2498 in 23S rRNA. The polypeptide is Ribosomal RNA large subunit methyltransferase M (Escherichia coli O127:H6 (strain E2348/69 / EPEC)).